Here is a 132-residue protein sequence, read N- to C-terminus: Mediator of RNA polymerase II transcription subunit 11 (132 aa).

This sequence belongs to the Mediator complex subunit 11 family. Component of the Mediator complex.

It is found in the nucleus. Functionally, component of the Mediator complex, a coactivator involved in the regulated transcription of nearly all RNA polymerase II-dependent genes. Mediator functions as a bridge to convey information from gene-specific regulatory proteins to the basal RNA polymerase II transcription machinery. Mediator is recruited to promoters by direct interactions with regulatory proteins and serves as a scaffold for theQ9P086 assembly of a functional pre-initiation complex with RNA polymerase II and the general transcription factors. The polypeptide is Mediator of RNA polymerase II transcription subunit 11 (MED11) (Aedes aegypti (Yellowfever mosquito)).